The chain runs to 290 residues: Signal peptidase I (290 aa).

The Cytoplasmic segment spans residues 1–13; sequence MKFLRSVYAFCSS. A helical transmembrane segment spans residues 14–34; sequence WVGTIIIVLLVIFFIAQAFII. Over 35–290 the chain is Extracellular; sequence PSRSMVGTLY…KIIKKEKATH (256 aa). Active-site residues include S38 and K106.

It belongs to the peptidase S26 family.

It is found in the cell membrane. The catalysed reaction is Cleavage of hydrophobic, N-terminal signal or leader sequences from secreted and periplasmic proteins.. In Helicobacter pylori (strain J99 / ATCC 700824) (Campylobacter pylori J99), this protein is Signal peptidase I (lepB).